Reading from the N-terminus, the 252-residue chain is Flagellar L-ring protein (252 aa).

Positions 1–25 (MSKSVPLQRIVLVAALMATGGLAGG) are cleaved as a signal peptide. The N-palmitoyl cysteine moiety is linked to residue cysteine 26. Cysteine 26 carries the S-diacylglycerol cysteine lipid modification.

The protein belongs to the FlgH family. In terms of assembly, the basal body constitutes a major portion of the flagellar organelle and consists of four rings (L,P,S, and M) mounted on a central rod.

It localises to the cell outer membrane. The protein localises to the bacterial flagellum basal body. Assembles around the rod to form the L-ring and probably protects the motor/basal body from shearing forces during rotation. This is Flagellar L-ring protein from Rhodopseudomonas palustris (strain ATCC BAA-98 / CGA009).